The sequence spans 947 residues: Bifunctional glutamine synthetase adenylyltransferase/adenylyl-removing enzyme (947 aa).

The adenylyl removase stretch occupies residues 1–440 (MTPLSSPLSQ…VFNELIGDDE (440 aa)). The segment at 450-947 (SEPWREVWQD…ASWRKWLVAV (498 aa)) is adenylyl transferase.

Belongs to the GlnE family. Requires Mg(2+) as cofactor.

The catalysed reaction is [glutamine synthetase]-O(4)-(5'-adenylyl)-L-tyrosine + phosphate = [glutamine synthetase]-L-tyrosine + ADP. It catalyses the reaction [glutamine synthetase]-L-tyrosine + ATP = [glutamine synthetase]-O(4)-(5'-adenylyl)-L-tyrosine + diphosphate. Involved in the regulation of glutamine synthetase GlnA, a key enzyme in the process to assimilate ammonia. When cellular nitrogen levels are high, the C-terminal adenylyl transferase (AT) inactivates GlnA by covalent transfer of an adenylyl group from ATP to specific tyrosine residue of GlnA, thus reducing its activity. Conversely, when nitrogen levels are low, the N-terminal adenylyl removase (AR) activates GlnA by removing the adenylyl group by phosphorolysis, increasing its activity. The regulatory region of GlnE binds the signal transduction protein PII (GlnB) which indicates the nitrogen status of the cell. This Salmonella agona (strain SL483) protein is Bifunctional glutamine synthetase adenylyltransferase/adenylyl-removing enzyme.